The chain runs to 484 residues: Cysteine--tRNA ligase (484 aa).

Position 27 (C27) interacts with Zn(2+). Positions 29–39 (PTTYNYIHLGN) match the 'HIGH' region motif. The Zn(2+) site is built by C207, H232, and E236. The short motif at 264–268 (KMSKS) is the 'KMSKS' region element. Residue K267 coordinates ATP.

This sequence belongs to the class-I aminoacyl-tRNA synthetase family. In terms of assembly, monomer. Requires Zn(2+) as cofactor.

The protein localises to the cytoplasm. It carries out the reaction tRNA(Cys) + L-cysteine + ATP = L-cysteinyl-tRNA(Cys) + AMP + diphosphate. The protein is Cysteine--tRNA ligase of Pelotomaculum thermopropionicum (strain DSM 13744 / JCM 10971 / SI).